The chain runs to 383 residues: La protein homolog (383 aa).

The segment at 1-43 is disordered; sequence MTEVEAKATATEETTKEEEEAPETTAEQTEESAQETSENVSKL. Residues 15–33 are compositionally biased toward acidic residues; the sequence is TKEEEEAPETTAEQTEESA. The HTH La-type RNA-binding domain maps to 37-129; it reads SENVSKLEAS…RRHPERPLPE (93 aa). The region spanning 141-228 is the RRM domain; sequence RTVYVKGFAP…RKMQDDYFEE (88 aa). In terms of domain architecture, xRRM spans 249 to 368; sequence HLPKGASVHL…RTPEGRQASR (120 aa). The disordered stretch occupies residues 343–383; it reads KDQQARRQASNARNKGRTPEGRQASRPPQEWRRKAKGGRGE.

The protein resides in the nucleus. It is found in the cytoplasm. Functionally, may be involved in transcription termination by RNA polymerase III. Binds RNA and DNA. Binds to the 3' end of the minus strand of Sindbis virus RNA. This may be significant for Sindbis virus RNA replication. In Aedes albopictus (Asian tiger mosquito), this protein is La protein homolog.